The sequence spans 205 residues: Ribosomal RNA small subunit methyltransferase G (205 aa).

Residues glycine 71, phenylalanine 76, 120-121 (IE), and arginine 134 each bind S-adenosyl-L-methionine.

This sequence belongs to the methyltransferase superfamily. RNA methyltransferase RsmG family.

It localises to the cytoplasm. It catalyses the reaction guanosine(527) in 16S rRNA + S-adenosyl-L-methionine = N(7)-methylguanosine(527) in 16S rRNA + S-adenosyl-L-homocysteine. In terms of biological role, specifically methylates the N7 position of guanine in position 527 of 16S rRNA. The protein is Ribosomal RNA small subunit methyltransferase G of Paramagnetospirillum magneticum (strain ATCC 700264 / AMB-1) (Magnetospirillum magneticum).